The following is a 158-amino-acid chain: Ribosome maturation factor RimP (158 aa).

It belongs to the RimP family.

It localises to the cytoplasm. Its function is as follows. Required for maturation of 30S ribosomal subunits. The chain is Ribosome maturation factor RimP from Lactobacillus gasseri (strain ATCC 33323 / DSM 20243 / BCRC 14619 / CIP 102991 / JCM 1131 / KCTC 3163 / NCIMB 11718 / NCTC 13722 / AM63).